We begin with the raw amino-acid sequence, 447 residues long: Phosphoglucosamine mutase (447 aa).

The active-site Phosphoserine intermediate is serine 104. 4 residues coordinate Mg(2+): serine 104, aspartate 243, aspartate 245, and aspartate 247. Serine 104 carries the phosphoserine modification.

Belongs to the phosphohexose mutase family. Mg(2+) serves as cofactor. Post-translationally, activated by phosphorylation.

It catalyses the reaction alpha-D-glucosamine 1-phosphate = D-glucosamine 6-phosphate. In terms of biological role, catalyzes the conversion of glucosamine-6-phosphate to glucosamine-1-phosphate. This Corynebacterium glutamicum (strain R) protein is Phosphoglucosamine mutase.